The chain runs to 498 residues: Cytochrome P450 71B31 (498 aa).

The chain crosses the membrane as a helical span at residues 3-23 (MFLGLLFLFPLFFILFKNLLP). Position 441 (C441) interacts with heme.

Belongs to the cytochrome P450 family. Heme serves as cofactor.

It is found in the membrane. The sequence is that of Cytochrome P450 71B31 (CYP71B31) from Arabidopsis thaliana (Mouse-ear cress).